The following is a 135-amino-acid chain: MSKEFSRTQRVSQQLQKELAVMLQREVRDSRIGMVTISDVEVSRDLAYAKVFVTFFCVGDQTPESSLAALKEHEPSLRMMLGKRIRLRLTPEIRFTYDNTLVEGMRMSNLVTDVVNTDKRKMAESGRTESDEGEE.

Belongs to the RbfA family. As to quaternary structure, monomer. Binds 30S ribosomal subunits, but not 50S ribosomal subunits or 70S ribosomes.

It is found in the cytoplasm. Its function is as follows. One of several proteins that assist in the late maturation steps of the functional core of the 30S ribosomal subunit. Associates with free 30S ribosomal subunits (but not with 30S subunits that are part of 70S ribosomes or polysomes). Required for efficient processing of 16S rRNA. May interact with the 5'-terminal helix region of 16S rRNA. The chain is Ribosome-binding factor A from Aliivibrio fischeri (strain MJ11) (Vibrio fischeri).